The sequence spans 284 residues: RAD52 motif-containing protein 1 (284 aa).

A necessary for nuclear localization and for nucleolar accumulation in response to heat shock region spans residues 1 to 92 (MAELVPFAVP…KQLFQKSPVK (92 aa)). Positions 15–98 (KTLLVWELSS…SPVKVRLGTR (84 aa)) constitute an RRM domain. A necessary for nuclear and nucleolar localization region spans residues 90-133 (PVKVRLGTRHKAVQHQALALNSSKCQELANYYFGFNGCSKRIIK).

As to quaternary structure, homodimer. In terms of tissue distribution, expressed in testis.

Its subcellular location is the nucleus. It is found in the cytoplasm. The protein localises to the nucleolus. The protein resides in the PML body. It localises to the cajal body. Functionally, may confer resistance to the antitumor agent cisplatin. Binds to DNA and RNA. In Homo sapiens (Human), this protein is RAD52 motif-containing protein 1 (RDM1).